The chain runs to 589 residues: NADPH-dependent diflavin oxidoreductase 1 (589 aa).

Residues 5-151 (ITILYGSETG…YYIEWEAELI (147 aa)) enclose the Flavodoxin-like domain. FMN-binding positions include 11 to 16 (SETGNA), 60 to 63 (STTG), 98 to 107 (VGDSSYVKYN), and glutamate 133. An FAD-binding FR-type domain is found at 202–439 (DGLKLGTVLE…SIQRSSFKYK (238 aa)). Residues arginine 349, 380–383 (RMFS), and 412–415 (GVCT) each bind FAD. NADP(+) is bound by residues threonine 452 and 507–508 (SR). Tryptophan 589 provides a ligand contact to FAD.

Belongs to the NADPH-dependent diflavin oxidoreductase NDOR1 family. It in the N-terminal section; belongs to the flavodoxin family. The protein in the C-terminal section; belongs to the flavoprotein pyridine nucleotide cytochrome reductase family. In terms of assembly, interacts with DRE2; as part of the cytosolic iron-sulfur (Fe-S) protein assembly (CIA) machinery. It depends on FAD as a cofactor. FMN serves as cofactor.

It is found in the cytoplasm. Its subcellular location is the mitochondrion. It carries out the reaction 2 oxidized [2Fe-2S]-[protein] + NADPH = 2 reduced [2Fe-2S]-[protein] + NADP(+) + H(+). NADPH-dependent reductase which is a central component of the cytosolic iron-sulfur (Fe-S) protein assembly (CIA) machinery. Transfers electrons from NADPH via its FAD and FMN prosthetic groups to the [2Fe-2S] cluster of DRE2, another key component of the CIA machinery. In turn, this reduced cluster provides electrons for assembly of cytosolic iron-sulfur cluster proteins. Positively controls H(2)O(2)-induced cell death. The protein is NADPH-dependent diflavin oxidoreductase 1 of Candida albicans (strain SC5314 / ATCC MYA-2876) (Yeast).